We begin with the raw amino-acid sequence, 369 residues long: MSSALLLAPGDLIEKAKRELEQRSITPLLREKGSTEAKSKLKEDGEKKNKSEKEENKIHDDRRVESQKSEGGGPADCQRGAGSRGANCATSTGGGDGSAGARTGIGGGGVGRVDSRSGGRGGQGAASDGKGVGKSKTGADRVANDDATRNVGSSEVSPGGITSGGLQGRGGLVAKSGECGGESLDRIGGCSGNSKTEGEEAKAGGGDRRIGGLATQEIADFVKKKIGVEVQVFSKGMSNLFTVDKSLLKRGGLGREDILHQSDIVKEIRASDKKVKIIPLSTVKRMIAEFGGTEEDEIKAVQTQSSSIRYISNRMEDVSRAKAMFTAPTGDEGWKEVAKAATQRPNIMAYVHEGEGDGLKELLHLIDHI.

Disordered regions lie at residues 17–169 and 184–208; these read KREL…LQGR and LDRI…GGDR. Positions 29 to 68 are enriched in basic and acidic residues; that stretch reads LREKGSTEAKSKLKEDGEKKNKSEKEENKIHDDRRVESQK. Gly residues predominate over residues 92 to 111; it reads TGGGDGSAGARTGIGGGGVG. Composition is skewed to basic and acidic residues over residues 137-148 and 196-208; these read TGADRVANDDAT and TEGE…GGDR.

The protein belongs to the orbivirus VP6 family.

It is found in the virion. This is Protein VP6 (Segment-9) from African horse sickness virus (AHSV).